The sequence spans 103 residues: Flagellar hook-basal body complex protein FliE (103 aa).

Belongs to the FliE family.

Its subcellular location is the bacterial flagellum basal body. This is Flagellar hook-basal body complex protein FliE from Yersinia enterocolitica serotype O:8 / biotype 1B (strain NCTC 13174 / 8081).